The following is a 966-amino-acid chain: Glycine dehydrogenase (decarboxylating) (966 aa).

At Lys-713 the chain carries N6-(pyridoxal phosphate)lysine.

It belongs to the GcvP family. The glycine cleavage system is composed of four proteins: P, T, L and H. Pyridoxal 5'-phosphate is required as a cofactor.

It catalyses the reaction N(6)-[(R)-lipoyl]-L-lysyl-[glycine-cleavage complex H protein] + glycine + H(+) = N(6)-[(R)-S(8)-aminomethyldihydrolipoyl]-L-lysyl-[glycine-cleavage complex H protein] + CO2. Its function is as follows. The glycine cleavage system catalyzes the degradation of glycine. The P protein binds the alpha-amino group of glycine through its pyridoxal phosphate cofactor; CO(2) is released and the remaining methylamine moiety is then transferred to the lipoamide cofactor of the H protein. The chain is Glycine dehydrogenase (decarboxylating) from Shewanella halifaxensis (strain HAW-EB4).